The following is a 589-amino-acid chain: Mitoguardin 2 (589 aa).

The next 2 helical transmembrane spans lie at 11 to 31 (IIQALAMTVAEIPVFLYTTFG) and 42 to 62 (PGLRKVLFATALGTVALALAA). The disordered stretch occupies residues 87–134 (VPGSVLPVRRSSSAKKGYSRSRVQSPSSKSNDTLSGISSLDPSKHSSS). 2 stretches are compositionally biased toward low complexity: residues 106-116 (RSRVQSPSSKS) and 123-134 (ISSLDPSKHSSS).

It belongs to the mitoguardin family. As to quaternary structure, homodimer and heterodimer; forms heterodimers with miga1.

Its subcellular location is the mitochondrion outer membrane. Functionally, regulator of mitochondrial fusion: acts by forming homo- and heterodimers at the mitochondrial outer membrane and facilitating the formation of pld6/MitoPLD dimers. May act by regulating phospholipid metabolism via pld6/MitoPLD. In Xenopus laevis (African clawed frog), this protein is Mitoguardin 2.